The primary structure comprises 342 residues: Anthranilate phosphoribosyltransferase (342 aa).

5-phospho-alpha-D-ribose 1-diphosphate is bound by residues glycine 81, 84-85 (GD), threonine 89, 91-94 (NVST), 109-117 (KHGNRAASS), and alanine 121. Glycine 81 serves as a coordination point for anthranilate. Serine 93 serves as a coordination point for Mg(2+). Asparagine 112 lines the anthranilate pocket. Arginine 167 serves as a coordination point for anthranilate. Residues aspartate 226 and glutamate 227 each coordinate Mg(2+).

It belongs to the anthranilate phosphoribosyltransferase family. As to quaternary structure, homodimer. The cofactor is Mg(2+).

The catalysed reaction is N-(5-phospho-beta-D-ribosyl)anthranilate + diphosphate = 5-phospho-alpha-D-ribose 1-diphosphate + anthranilate. It participates in amino-acid biosynthesis; L-tryptophan biosynthesis; L-tryptophan from chorismate: step 2/5. Catalyzes the transfer of the phosphoribosyl group of 5-phosphorylribose-1-pyrophosphate (PRPP) to anthranilate to yield N-(5'-phosphoribosyl)-anthranilate (PRA). The polypeptide is Anthranilate phosphoribosyltransferase (Beijerinckia indica subsp. indica (strain ATCC 9039 / DSM 1715 / NCIMB 8712)).